The following is a 300-amino-acid chain: Cation-efflux pump FieF (300 aa).

Residues 24–44 (LLIKIFAWWYTGSVSILAALV) form a helical membrane-spanning segment. Positions 45 and 49 each coordinate Zn(2+). Transmembrane regions (helical) follow at residues 82–102 (AALAQSMFISGSALFLFLTGI) and 114–134 (AGVGVVVTLIALFSTLALVTF). The Zn(2+) site is built by His-153 and Asp-157. The next 2 membrane-spanning stretches (helical) occupy residues 156–176 (SDVMMNGAILVALGLSWYGWH) and 178–198 (ADALFALGIGIYILYSALRMG).

Belongs to the cation diffusion facilitator (CDF) transporter (TC 2.A.4) family. FieF subfamily. As to quaternary structure, homodimer.

The protein resides in the cell inner membrane. The catalysed reaction is Zn(2+)(in) + H(+)(out) = Zn(2+)(out) + H(+)(in). The enzyme catalyses Cd(2+)(in) + H(+)(out) = Cd(2+)(out) + H(+)(in). It carries out the reaction Fe(2+)(in) + H(+)(out) = Fe(2+)(out) + H(+)(in). In terms of biological role, divalent metal cation transporter which exports Zn(2+), Cd(2+) and possibly Fe(2+). May be involved in zinc and iron detoxification by efflux. In Klebsiella pneumoniae (strain 342), this protein is Cation-efflux pump FieF.